A 292-amino-acid chain; its full sequence is tRNA-splicing endonuclease (292 aa).

Active-site residues include Y231, H238, and K267.

Belongs to the tRNA-intron endonuclease family. Archaeal long subfamily. As to quaternary structure, homodimer.

It catalyses the reaction pretRNA = a 3'-half-tRNA molecule with a 5'-OH end + a 5'-half-tRNA molecule with a 2',3'-cyclic phosphate end + an intron with a 2',3'-cyclic phosphate and a 5'-hydroxyl terminus.. Functionally, endonuclease that removes tRNA introns. Cleaves pre-tRNA at the 5'- and 3'-splice sites to release the intron. The products are an intron and two tRNA half-molecules bearing 2',3' cyclic phosphate and 5'-OH termini. Recognizes a pseudosymmetric substrate in which 2 bulged loops of 3 bases are separated by a stem of 4 bp. The polypeptide is tRNA-splicing endonuclease (Thermoplasma volcanium (strain ATCC 51530 / DSM 4299 / JCM 9571 / NBRC 15438 / GSS1)).